Here is a 63-residue protein sequence, read N- to C-terminus: Large ribosomal subunit protein eL29 (63 aa).

Positions 1 to 26 are enriched in basic residues; sequence MAKSKNHTAHNQTRKAHRNGIKKPKT. The segment at 1-35 is disordered; it reads MAKSKNHTAHNQTRKAHRNGIKKPKTYKYPSLKGV.

It belongs to the eukaryotic ribosomal protein eL29 family. In terms of assembly, component of the large ribosomal subunit. Mature ribosomes consist of a small (40S) and a large (60S) subunit. The 40S subunit contains about 32 different proteins and 1 molecule of RNA (18S). The 60S subunit contains 45 different proteins and 3 molecules of RNA (25S, 5.8S and 5S).

It is found in the cytoplasm. Functionally, component of the ribosome, a large ribonucleoprotein complex responsible for the synthesis of proteins in the cell. The small ribosomal subunit (SSU) binds messenger RNAs (mRNAs) and translates the encoded message by selecting cognate aminoacyl-transfer RNA (tRNA) molecules. The large subunit (LSU) contains the ribosomal catalytic site termed the peptidyl transferase center (PTC), which catalyzes the formation of peptide bonds, thereby polymerizing the amino acids delivered by tRNAs into a polypeptide chain. The nascent polypeptides leave the ribosome through a tunnel in the LSU and interact with protein factors that function in enzymatic processing, targeting, and the membrane insertion of nascent chains at the exit of the ribosomal tunnel. This is Large ribosomal subunit protein eL29 from Candida albicans (strain SC5314 / ATCC MYA-2876) (Yeast).